Reading from the N-terminus, the 137-residue chain is Ig heavy chain V region MOPC 315 (137 aa).

Positions 1–18 (MKVLSLLYLLTAIPGIMS) are cleaved as a signal peptide. The interval 19 to 48 (DVQLQESGPGLVKPSQSLSLTCSVTGYSIT) is framework-1. Cysteines 40 and 114 form a disulfide. Residues 49 to 54 (SGYFWN) form a complementarity-determining-1 region. The tract at residues 55–68 (WIRQFPGNKLEWLG) is framework-2. A complementarity-determining-2 region spans residues 69–84 (FIKYDGSNGYNPSLKN). Positions 85-116 (RVSITRDTSENQFFLKLNSVTTEDTATYYCAG) are framework-3. Positions 117–126 (DNDHLYYFDY) are complementarity-determining-3. Positions 127–137 (WGQGTTLTVSS) are framework-4.

This is Ig heavy chain V region MOPC 315 from Mus musculus (Mouse).